The following is a 331-amino-acid chain: Putative ankyrin repeat protein RBE_0261 (331 aa).

An ANK repeat occupies 94–159 (QGENVIHKCV…KAKNTLLNIV (66 aa)).

The polypeptide is Putative ankyrin repeat protein RBE_0261 (Rickettsia bellii (strain RML369-C)).